We begin with the raw amino-acid sequence, 1170 residues long: Structural maintenance of chromosomes protein 2 (1170 aa).

Gly32 to Ser39 is an ATP binding site. Positions Lys172 to Tyr469 form a coiled coil. The region spanning Val523–Ile641 is the SMC hinge domain. A coiled-coil region spans residues Val678–Glu1027.

It belongs to the SMC family. SMC2 subfamily. As to quaternary structure, forms a heterodimer with SMC4. Component of the condensin complex, which contains the SMC2 and SMC4 heterodimer, and three non SMC subunits that probably regulate the complex: BRN1, YCS4 and YCG1/YCS5.

Its subcellular location is the nucleus. It is found in the cytoplasm. The protein localises to the chromosome. Central component of the condensin complex, a complex required for conversion of interphase chromatin into mitotic-like condense chromosomes. The condensin complex probably introduces positive supercoils into relaxed DNA in the presence of type I topoisomerases and converts nicked DNA into positive knotted forms in the presence of type II topoisomerases. This chain is Structural maintenance of chromosomes protein 2 (SMC2), found in Saccharomyces cerevisiae (strain ATCC 204508 / S288c) (Baker's yeast).